A 269-amino-acid chain; its full sequence is NAD kinase (269 aa).

Catalysis depends on Asp45, which acts as the Proton acceptor. Residues 45-46, 122-123, Arg149, Asp151, and Ala186 each bind NAD(+); these read DG and NE.

Belongs to the NAD kinase family. A divalent metal cation serves as cofactor.

It is found in the cytoplasm. The catalysed reaction is NAD(+) + ATP = ADP + NADP(+) + H(+). In terms of biological role, involved in the regulation of the intracellular balance of NAD and NADP, and is a key enzyme in the biosynthesis of NADP. Catalyzes specifically the phosphorylation on 2'-hydroxyl of the adenosine moiety of NAD to yield NADP. The polypeptide is NAD kinase (Staphylococcus aureus (strain Mu3 / ATCC 700698)).